The primary structure comprises 146 residues: Hemoglobin subunit beta (146 aa).

Positions 2–146 constitute a Globin domain; sequence EWTQQERSII…VVFALGRKYH (145 aa). The heme b site is built by H63 and H92.

Belongs to the globin family. Heterotetramer of two alpha chains and two beta chains. In terms of tissue distribution, red blood cells.

In terms of biological role, involved in oxygen transport from gills to the various peripheral tissues. The protein is Hemoglobin subunit beta (hbb) of Thunnus thynnus (Atlantic bluefin tuna).